The sequence spans 251 residues: MLQIKNLSKSFPNPYGEPNTIFENLSIDIEDGEFVSIIGSNGTGKSTLLNIISGLIKESSGQITLDSTTITNLAEYKRTQIVSRVFQDPSLGTCPSMTVRENLSLALNKGKLLNLKKCLRHKTNNLEHLLEGISLDLKKYLDIKVQYLSGGQRQSLSLIMSSLASPKVLLLDEHTAALDPKTSNEVIELTDKIVREKNITTLMVTHNLKHALQYGDRLIMLHKGEVVLDVKDKEKENLTVEEILEKFEYAV.

The 247-residue stretch at 2–248 folds into the ABC transporter domain; it reads LQIKNLSKSF…TVEEILEKFE (247 aa). 39–46 lines the ATP pocket; it reads GSNGTGKS.

It belongs to the ABC transporter superfamily. As to quaternary structure, the complex is probably composed of two ATP-binding proteins (CDR20291_0806), two transmembrane proteins (CDR20291_0807) and a solute-binding protein (CDR20291_0805).

It is found in the cell membrane. It catalyses the reaction L-tyrosine(out) + ATP + H2O = L-tyrosine(in) + ADP + phosphate + H(+). Probably part of an ABC transporter complex involved in tyrosine uptake. May also import phenylalanine. Probably responsible for energy coupling to the transport system. This is Tyrosine transport ATP-binding protein from Clostridioides difficile (strain R20291) (Peptoclostridium difficile).